Consider the following 188-residue polypeptide: dCTP deaminase (188 aa).

Residues 111 to 116 (KSTYAR), 135 to 137 (TLE), Q156, Y170, K179, and Q180 contribute to the dCTP site. E137 functions as the Proton donor/acceptor in the catalytic mechanism.

This sequence belongs to the dCTP deaminase family. In terms of assembly, homotrimer.

It catalyses the reaction dCTP + H2O + H(+) = dUTP + NH4(+). It participates in pyrimidine metabolism; dUMP biosynthesis; dUMP from dCTP (dUTP route): step 1/2. In terms of biological role, catalyzes the deamination of dCTP to dUTP. This is dCTP deaminase from Rickettsia africae (strain ESF-5).